The following is a 62-amino-acid chain: 2-hydroxymuconate tautomerase (62 aa).

Catalysis depends on proline 2, which acts as the Proton acceptor; via imino nitrogen. Substrate is bound at residue 9 to 12 (LEGR).

This sequence belongs to the 4-oxalocrotonate tautomerase family. As to quaternary structure, homohexamer.

The catalysed reaction is (2Z,4E)-2-hydroxyhexa-2,4-dienedioate = (3E)-2-oxohex-3-enedioate. Catalyzes both 1,3- and 1,5-keto-enol tautomerization of the diacid 2-hydroxymuconate (2-hydroxy-2,4-hexadienedioate) to produce 2-oxo-4-hexenedioate. This reaction is highly stereoselective and produces a mixture of stereoisomers, where the (3S)-isomer of 2-oxo-4-hexenedioate predominates. Also catalyzes the tautomerization of 2-hydroxymuconate to 2-oxo-3-hexenedioate, however this reaction is slower and occurs after the tautomerization of 2-hydroxymuconate to 2-oxo-4-hexenedioate. Using 2-hydroxy-2,4-pentadienoate, phenylenolpyruvate, (p-hydroxyphenyl)-enolpyruvate and 2-hydroxy-2,4-heptadiene-1,7-dioate, YwhB is a highly efficient 1,3-keto-enol tautomerase, but clearly not a 1,5-keto-enol tautomerase. Tautomerization of the two monoacids 2-hydroxy-2,4-pentadienoate and phenylenolpyruvate produces a mixture of stereoisomers, where the (3R)-isomers predominate. This Bacillus subtilis (strain 168) protein is 2-hydroxymuconate tautomerase (ywhB).